The primary structure comprises 400 residues: GTPase Obg (400 aa).

The Obg domain maps to Met-1–Leu-159. The OBG-type G domain maps to Ala-160–Asp-333. GTP-binding positions include Gly-166–Ser-173, Phe-191–Val-195, Asp-213–Gly-216, Asn-283–Asp-286, and Thr-314–Ile-316. Positions 173 and 193 each coordinate Mg(2+).

Belongs to the TRAFAC class OBG-HflX-like GTPase superfamily. OBG GTPase family. In terms of assembly, monomer. Mg(2+) serves as cofactor.

The protein resides in the cytoplasm. Functionally, an essential GTPase which binds GTP, GDP and possibly (p)ppGpp with moderate affinity, with high nucleotide exchange rates and a fairly low GTP hydrolysis rate. Plays a role in control of the cell cycle, stress response, ribosome biogenesis and in those bacteria that undergo differentiation, in morphogenesis control. The sequence is that of GTPase Obg from Aeromonas hydrophila subsp. hydrophila (strain ATCC 7966 / DSM 30187 / BCRC 13018 / CCUG 14551 / JCM 1027 / KCTC 2358 / NCIMB 9240 / NCTC 8049).